Reading from the N-terminus, the 131-residue chain is Large ribosomal subunit protein bL21 (131 aa).

Over residues 106-116 (TIDDMPKKEAA) the composition is skewed to basic and acidic residues. Positions 106 to 131 (TIDDMPKKEAAPAKARRSTKKAAAAE) are disordered.

Belongs to the bacterial ribosomal protein bL21 family. In terms of assembly, part of the 50S ribosomal subunit. Contacts protein L20.

Functionally, this protein binds to 23S rRNA in the presence of protein L20. The polypeptide is Large ribosomal subunit protein bL21 (Koribacter versatilis (strain Ellin345)).